The sequence spans 258 residues: Isoprenyl transferase 2 (258 aa).

Aspartate 39 is a catalytic residue. Aspartate 39 lines the Mg(2+) pocket. Residues 40-43 (GNRR), tryptophan 44, arginine 52, histidine 57, and 85-87 (SND) contribute to the substrate site. Asparagine 88 functions as the Proton acceptor in the catalytic mechanism. Substrate-binding positions include arginine 92, arginine 207, and 213–215 (RLS). Glutamate 226 is a Mg(2+) binding site.

This sequence belongs to the UPP synthase family. As to quaternary structure, homodimer. Requires Mg(2+) as cofactor.

Functionally, catalyzes the condensation of isopentenyl diphosphate (IPP) with allylic pyrophosphates generating different type of terpenoids. The sequence is that of Isoprenyl transferase 2 from Tropheryma whipplei (strain Twist) (Whipple's bacillus).